The chain runs to 283 residues: uncharacterized protein (283 aa).

The first 25 residues, 1 to 25 (MNKKRLLFRTPLDALFLLFGTALSA), serve as a signal peptide directing secretion. A lipid anchor (N-palmitoyl cysteine) is attached at Cys26. Cys26 carries the S-diacylglycerol cysteine lipid modification.

It belongs to the MG439/MG440 family.

Its subcellular location is the cell membrane. This is an uncharacterized protein from Mycoplasma pneumoniae (strain ATCC 29342 / M129 / Subtype 1) (Mycoplasmoides pneumoniae).